The primary structure comprises 209 residues: MARYCGPKNRIARRFGANIFGRGRNPLLRKPNPPGQHGMQRKKKSDYGLQLEEKQKLKACYGMILEKQLVKAYKEVVNKQGNVAQMFLEKFECRLDNIVYRLGFAKTIFAAQQLVSHGHVLVNGKKVDRRSFFVRPGMQISLKEKSKRLAIVTESLENKDQSSLPAYLSLDKAAFKGELVVAPELDQIASQLPLPVNVSVICEFLSHRT.

A disordered region spans residues 22 to 45 (RGRNPLLRKPNPPGQHGMQRKKKS). Positions 93-154 (CRLDNIVYRL…KSKRLAIVTE (62 aa)) constitute an S4 RNA-binding domain.

This sequence belongs to the universal ribosomal protein uS4 family. Part of the 30S ribosomal subunit. Contacts protein S5. The interaction surface between S4 and S5 is involved in control of translational fidelity.

In terms of biological role, one of the primary rRNA binding proteins, it binds directly to 16S rRNA where it nucleates assembly of the body of the 30S subunit. Its function is as follows. With S5 and S12 plays an important role in translational accuracy. This Chlamydia trachomatis serovar A (strain ATCC VR-571B / DSM 19440 / HAR-13) protein is Small ribosomal subunit protein uS4.